We begin with the raw amino-acid sequence, 141 residues long: MRARTRRLYTFGIAAALIVAAAALAFFALRENANLFYTPEVLAEKGLPREGREVKVGGWVEPGSLTYADGGATMRFTVIDNSPSTITVSFNGVAPDLFREGQGVVATGTFTPEGEFTARQLLAKHDENYQPRELKPLEAGG.

The Cytoplasmic portion of the chain corresponds to 1–7; the sequence is MRARTRR. A helical; Signal-anchor for type II membrane protein transmembrane segment spans residues 8 to 28; sequence LYTFGIAAALIVAAAALAFFA. At 29–141 the chain is on the periplasmic side; it reads LRENANLFYT…RELKPLEAGG (113 aa). Heme contacts are provided by His125 and Tyr129.

This sequence belongs to the CcmE/CycJ family.

The protein localises to the cell inner membrane. Its function is as follows. Heme chaperone required for the biogenesis of c-type cytochromes. Transiently binds heme delivered by CcmC and transfers the heme to apo-cytochromes in a process facilitated by CcmF and CcmH. This is Cytochrome c-type biogenesis protein CcmE from Hyphomonas neptunium (strain ATCC 15444).